Reading from the N-terminus, the 1286-residue chain is X-linked retinitis pigmentosa GTPase regulator-interacting protein 1 (1286 aa).

The interval Gln-144–Pro-193 is disordered. Composition is skewed to basic and acidic residues over residues Glu-159–Leu-169 and Phe-177–Val-189. Residues Lys-294–Leu-584 adopt a coiled-coil conformation. In terms of domain architecture, C2 spans Gly-781 to Phe-906. 2 disordered regions span residues Ser-934–Gly-1008 and Glu-1058–Gln-1108. Composition is skewed to basic and acidic residues over residues Ala-940–Ala-960, His-988–Gln-998, and Lys-1070–Ser-1084. The segment covering Glu-1085–Thr-1096 has biased composition (polar residues). Residues Ser-1091 to Thr-1281 form an interaction with RPGR region.

Belongs to the RPGRIP1 family. In terms of assembly, forms homodimers and elongated homopolymers. Interacts with RPGR. Interacts with NPHP4. Interacts with NEK4. Interacts with SPATA7. Interacts with CEP290/NPHP6; mediating the association between RPGR and CEP290/NPHP6. Strong expression in retina, with weaker expression in testis. Expressed in other neurons such as amacrine cells. Colocalizes with RGPR in the outer segment of rod photoreceptors and cone outer segments.

It is found in the cell projection. The protein resides in the cilium. Functionally, may function as scaffolding protein. Required for normal location of RPGR at the connecting cilium of photoreceptor cells. Required for normal disk morphogenesis and disk organization in the outer segment of photoreceptor cells and for survival of photoreceptor cells. The chain is X-linked retinitis pigmentosa GTPase regulator-interacting protein 1 (RPGRIP1) from Homo sapiens (Human).